Here is a 532-residue protein sequence, read N- to C-terminus: Membrane protein insertase YidC (532 aa).

Helical transmembrane passes span Phe-7–Met-27, Leu-336–Ile-356, Gly-413–Ile-433, Leu-450–Ile-470, and Pro-492–Ile-512.

The protein belongs to the OXA1/ALB3/YidC family. Type 1 subfamily. In terms of assembly, interacts with the Sec translocase complex via SecD. Specifically interacts with transmembrane segments of nascent integral membrane proteins during membrane integration.

Its subcellular location is the cell membrane. In terms of biological role, required for the insertion and/or proper folding and/or complex formation of integral membrane proteins into the membrane. Involved in integration of membrane proteins that insert both dependently and independently of the Sec translocase complex, as well as at least some lipoproteins. Aids folding of multispanning membrane proteins. This is Membrane protein insertase YidC from Buchnera aphidicola subsp. Acyrthosiphon pisum (strain APS) (Acyrthosiphon pisum symbiotic bacterium).